The sequence spans 4299 residues: DNA-dependent protein kinase catalytic subunit (4299 aa).

Positions 551–590 (KDLNSTIKKENNNNNNNKNKNNNNNQTLTKEEISKSIKKL) form a coiled coil. Disordered regions lie at residues 557-577 (IKKENNNNNNNKNKNNNNNQT), 613-633 (DENDNNSNSNSNNNNNNDQDN), 878-917 (NSSDSTSGGDIDIDSGGSMGGGGVVPPPSSSSRHRKMKFK), and 1206-1230 (SSSKNNSNSNSNNNNNNNNNSEDGT). 4 stretches are compositionally biased toward low complexity: residues 562 to 575 (NNNNNNKNKNNNNN), 617 to 631 (NNSNSNSNNNNNNDQ), 878 to 893 (NSSDSTSGGDIDIDSG), and 1206 to 1226 (SSSKNNSNSNSNNNNNNNNNS). Ser-2789 is subject to Phosphoserine; by autocatalysis. Phosphothreonine; by autocatalysis is present on residues Thr-2814 and Thr-2822. The segment covering 2832-2867 (SSSQSYGGTNNNTGSSQLSSSSSSSGSQSSSQNNSS) has biased composition (low complexity). 2 disordered regions span residues 2832–2881 (SSSQ…PKLI) and 3535–3559 (TTSSSPSLSISSSSSPYSSTSSSSQ). Positions 3031-3707 (KIKDISLNSN…YFPFKISSEQ (677 aa)) constitute an FAT domain. The 340-residue stretch at 3887 to 4226 (FDTNVLVMGS…AKKKLELVNP (340 aa)) folds into the PI3K/PI4K catalytic domain. The segment at 3893–3899 (VMGSLRK) is G-loop. The catalytic loop stretch occupies residues 4092–4100 (GIGDRHLEN). Positions 4112–4137 (GIDFGHAFGTATQFLPIPELMPFRLT) are activation loop. Residues 4267-4299 (VCSSVKEQIDCLIDQSTDPNILSRAWVGWNGAL) enclose the FATC domain.

The protein belongs to the PI3/PI4-kinase family. DNAPK subfamily. May be phosphorylated upon DNA damage. Could be autophosphorylated. Autophosphorylation induces a conformational change that leads to remodeling of the DNA-PK complex, requisite for efficient end processing and DNA repair. Post-translationally, autophosphorylated on Ser-2789, Thr-2814 and Thr-2822. Ser-2789 is a DNA damage-inducible phosphorylation site (inducible with ionizing radiation, IR).

It localises to the nucleus. The protein resides in the nucleolus. It catalyses the reaction L-seryl-[protein] + ATP = O-phospho-L-seryl-[protein] + ADP + H(+). The catalysed reaction is L-threonyl-[protein] + ATP = O-phospho-L-threonyl-[protein] + ADP + H(+). With respect to regulation, inhibited by wortmannin. Activity of the enzyme seems to be attenuated by autophosphorylation. Serine/threonine-protein kinase that acts as a molecular sensor for DNA damage. Is recruited to DNA ends by the Ku70/Ku80 heterodimer and is involved in DNA non-homologous end joining (NHEJ) required for double-strand break (DSB) repair and V(D)J recombination. This activity is only apparent when DNA damage is administered in G1 phase of the cell cycle. Required for efficient signaling of DNA double-stranded breaks via phosphorylation of H2AX during G1. The sequence is that of DNA-dependent protein kinase catalytic subunit (dnapkcs) from Dictyostelium discoideum (Social amoeba).